The sequence spans 146 residues: Hemoglobin subunit beta (146 aa).

An N-acetylvaline modification is found at V1. Residues H2 to H146 enclose the Globin domain. Position 12 is a phosphothreonine (T12). A Phosphoserine modification is found at S44. Residue K59 is modified to N6-acetyllysine. Heme b is bound at residue H63. K82 is subject to N6-acetyllysine. A heme b-binding site is contributed by H92. C93 is subject to S-nitrosocysteine. K144 bears the N6-acetyllysine mark.

The protein belongs to the globin family. Heterotetramer of two alpha chains and two beta chains. As to expression, red blood cells.

Functionally, involved in oxygen transport from the lung to the various peripheral tissues. The sequence is that of Hemoglobin subunit beta (HBB) from Tadarida brasiliensis (Brazilian free-tailed bat).